The primary structure comprises 192 residues: Orotate phosphoribosyltransferase (192 aa).

5-phospho-alpha-D-ribose 1-diphosphate is bound at residue E116–S124. Residues T120 and R148 each contribute to the orotate site.

This sequence belongs to the purine/pyrimidine phosphoribosyltransferase family. PyrE subfamily. In terms of assembly, homodimer. Mg(2+) serves as cofactor.

The enzyme catalyses orotidine 5'-phosphate + diphosphate = orotate + 5-phospho-alpha-D-ribose 1-diphosphate. Its pathway is pyrimidine metabolism; UMP biosynthesis via de novo pathway; UMP from orotate: step 1/2. Functionally, catalyzes the transfer of a ribosyl phosphate group from 5-phosphoribose 1-diphosphate to orotate, leading to the formation of orotidine monophosphate (OMP). This chain is Orotate phosphoribosyltransferase, found in Brucella abortus (strain S19).